We begin with the raw amino-acid sequence, 176 residues long: Inner membrane assembly complex subunit 17 (176 aa).

The transit peptide at 1 to 28 directs the protein to the mitochondrion; the sequence is MLRVLPTSFKSISTRSAFRACQLSPLTV. Topologically, residues 29 to 98 are mitochondrial matrix; the sequence is YCPLKSSQGT…MSQEVSLKRF (70 aa). A helical transmembrane segment spans residues 99 to 121; sequence VRPLWVFFLMSSTVYLILHYVWW. Residues 122–176 lie on the Mitochondrial intermembrane side of the membrane; that stretch reads KLEVVEKEKELQSHVESLEMELDQTLKSQNQNVSSSQNNGNNKTNDKPWYRKWFF. The stretch at 123–151 forms a coiled coil; it reads LEVVEKEKELQSHVESLEMELDQTLKSQN. Over residues 149 to 163 the composition is skewed to low complexity; sequence SQNQNVSSSQNNGNN. Positions 149–168 are disordered; that stretch reads SQNQNVSSSQNNGNNKTNDK.

It belongs to the INA17 family. As to quaternary structure, component of the inner membrane assembly (INA) complex, composed of INA17 and INA22. Interacts with a subset of F(1)F(0)-ATP synthase subunits of the F(1)-domain and the peripheral stalk.

It is found in the mitochondrion inner membrane. Its function is as follows. Component of the INA complex (INAC) that promotes the biogenesis of mitochondrial F(1)F(0)-ATP synthase. INAC facilitates the assembly of the peripheral stalk and promotes the assembly of the catalytic F(1)-domain with the membrane-embedded F(0)-domain. This Zygosaccharomyces rouxii (strain ATCC 2623 / CBS 732 / NBRC 1130 / NCYC 568 / NRRL Y-229) protein is Inner membrane assembly complex subunit 17.